We begin with the raw amino-acid sequence, 183 residues long: uncharacterized protein (183 aa).

Belongs to the isochorismatase family.

This is an uncharacterized protein from Bacillus subtilis (strain 168).